Here is a 607-residue protein sequence, read N- to C-terminus: UvrABC system protein C (607 aa).

Positions 19-97 (TLSGVYQMRD…IKQYQPKFNI (79 aa)) constitute a GIY-YIG domain. One can recognise a UVR domain in the interval 205–240 (EHLLQTLTEHMLQASAAQQYERAAIVRDQISELRTI).

Belongs to the UvrC family. Interacts with UvrB in an incision complex.

It is found in the cytoplasm. The UvrABC repair system catalyzes the recognition and processing of DNA lesions. UvrC both incises the 5' and 3' sides of the lesion. The N-terminal half is responsible for the 3' incision and the C-terminal half is responsible for the 5' incision. The polypeptide is UvrABC system protein C (Dichelobacter nodosus (strain VCS1703A)).